The chain runs to 274 residues: Large ribosomal subunit protein uL2 (274 aa).

The segment at 223-274 is disordered; sequence VAMNPVDHPHGGGEGRTSGGRHPVSPWGMPTKGFKTRKNKSTDKYIVRRRNK.

The protein belongs to the universal ribosomal protein uL2 family. Part of the 50S ribosomal subunit. Forms a bridge to the 30S subunit in the 70S ribosome.

In terms of biological role, one of the primary rRNA binding proteins. Required for association of the 30S and 50S subunits to form the 70S ribosome, for tRNA binding and peptide bond formation. It has been suggested to have peptidyltransferase activity; this is somewhat controversial. Makes several contacts with the 16S rRNA in the 70S ribosome. The chain is Large ribosomal subunit protein uL2 from Aliivibrio salmonicida (strain LFI1238) (Vibrio salmonicida (strain LFI1238)).